The following is a 146-amino-acid chain: Putative pre-16S rRNA nuclease (146 aa).

Belongs to the YqgF nuclease family.

The protein resides in the cytoplasm. Functionally, could be a nuclease involved in processing of the 5'-end of pre-16S rRNA. This chain is Putative pre-16S rRNA nuclease, found in Dechloromonas aromatica (strain RCB).